The following is a 956-amino-acid chain: Glutamate receptor ionotropic, kainate 4 (956 aa).

The signal sequence occupies residues 1-20 (MPRVSAPLVLLPAWLLMVAC). The Extracellular portion of the chain corresponds to 21 to 545 (SPHSLRIAAI…YFSSLDPFSP (525 aa)). Residues Asn-158, Asn-220, Asn-272, Asn-286, Asn-323, Asn-408, Asn-415, and Asn-479 are each glycosylated (N-linked (GlcNAc...) asparagine). 3 residues coordinate L-glutamate: Gly-500, Thr-502, and Arg-507. A helical transmembrane segment spans residues 546 to 566 (GVWLFMLLAYLAVSCVLFLVA). Topologically, residues 567-623 (RLTPYEWYSPHPCAQGRCNLLVNQYSLGNSLWFPVGGFMQQGSTIAPRALSTRCVSG) are cytoplasmic. A helical membrane pass occupies residues 624–644 (VWWAFTLIIISSYTANLAAFL). Residues 645-804 (TVQRMEVPIE…HRAKGLGMEN (160 aa)) lie on the Extracellular side of the membrane. Residues Ser-674, Ser-675, and Glu-723 each coordinate L-glutamate. A glycan (N-linked (GlcNAc...) asparagine) is linked at Asn-736. The chain crosses the membrane as a helical span at residues 805-825 (IGGIFVVLICGLIVAIFMAML). At 826–956 (EFLWTLRHSE…DKTTNSSEPE (131 aa)) the chain is on the cytoplasmic side. Residues 931–956 (LRARPSPARSEESLEWDKTTNSSEPE) are disordered. The segment covering 939–948 (RSEESLEWDK) has biased composition (basic and acidic residues).

Belongs to the glutamate-gated ion channel (TC 1.A.10.1) family. GRIK4 subfamily. In terms of assembly, homodimer. Can form functional heteromeric receptors with GRIK1, GRIK2 and GRIK3. Strong expression in hippocampal CA3 pyramidal cells. Low expression in hippocampal dentate granule cells, in layers II, V and VI of the cortex, and in cerebellar Purkinje cells. No expression in the striatum, reticular thalamus, hypothalamus or amygdaloid complex.

Its subcellular location is the cell membrane. It is found in the postsynaptic cell membrane. The protein localises to the presynaptic cell membrane. Its function is as follows. Ionotropic glutamate receptor that functions as a cation-permeable ligand-gated ion channel, gated by L-glutamate and the glutamatergic agonist kainic acid. Cannot form functional channels on its own and shows channel activity only in heteromeric assembly with GRIK1, GRIK2 and GRIK3 subunits. This is Glutamate receptor ionotropic, kainate 4 (Grik4) from Rattus norvegicus (Rat).